A 311-amino-acid polypeptide reads, in one-letter code: Aspartate carbamoyltransferase catalytic subunit (311 aa).

Residues Arg55 and Thr56 each coordinate carbamoyl phosphate. Lys85 contributes to the L-aspartate binding site. Residues Arg106, His135, and Gln138 each coordinate carbamoyl phosphate. Positions 168 and 230 each coordinate L-aspartate. Positions 268 and 269 each coordinate carbamoyl phosphate.

This sequence belongs to the aspartate/ornithine carbamoyltransferase superfamily. ATCase family. As to quaternary structure, heterododecamer (2C3:3R2) of six catalytic PyrB chains organized as two trimers (C3), and six regulatory PyrI chains organized as three dimers (R2).

The enzyme catalyses carbamoyl phosphate + L-aspartate = N-carbamoyl-L-aspartate + phosphate + H(+). The protein operates within pyrimidine metabolism; UMP biosynthesis via de novo pathway; (S)-dihydroorotate from bicarbonate: step 2/3. Its function is as follows. Catalyzes the condensation of carbamoyl phosphate and aspartate to form carbamoyl aspartate and inorganic phosphate, the committed step in the de novo pyrimidine nucleotide biosynthesis pathway. The protein is Aspartate carbamoyltransferase catalytic subunit of Escherichia coli (strain 55989 / EAEC).